The primary structure comprises 523 residues: Glutamate--cysteine ligase (523 aa).

It belongs to the glutamate--cysteine ligase type 1 family. Type 1 subfamily.

It carries out the reaction L-cysteine + L-glutamate + ATP = gamma-L-glutamyl-L-cysteine + ADP + phosphate + H(+). It functions in the pathway sulfur metabolism; glutathione biosynthesis; glutathione from L-cysteine and L-glutamate: step 1/2. The protein is Glutamate--cysteine ligase of Shewanella oneidensis (strain ATCC 700550 / JCM 31522 / CIP 106686 / LMG 19005 / NCIMB 14063 / MR-1).